Here is a 145-residue protein sequence, read N- to C-terminus: Large ribosomal subunit protein uL13 (145 aa).

Belongs to the universal ribosomal protein uL13 family. As to quaternary structure, part of the 50S ribosomal subunit.

This protein is one of the early assembly proteins of the 50S ribosomal subunit, although it is not seen to bind rRNA by itself. It is important during the early stages of 50S assembly. The polypeptide is Large ribosomal subunit protein uL13 (Macrococcus caseolyticus (strain JCSC5402) (Macrococcoides caseolyticum)).